The primary structure comprises 216 residues: Probable nicotinate-nucleotide adenylyltransferase (216 aa).

The protein belongs to the NadD family.

It catalyses the reaction nicotinate beta-D-ribonucleotide + ATP + H(+) = deamido-NAD(+) + diphosphate. It functions in the pathway cofactor biosynthesis; NAD(+) biosynthesis; deamido-NAD(+) from nicotinate D-ribonucleotide: step 1/1. Functionally, catalyzes the reversible adenylation of nicotinate mononucleotide (NaMN) to nicotinic acid adenine dinucleotide (NaAD). The sequence is that of Probable nicotinate-nucleotide adenylyltransferase from Klebsiella pneumoniae subsp. pneumoniae (strain ATCC 700721 / MGH 78578).